The sequence spans 102 residues: Large ribosomal subunit protein uL24 (102 aa).

This sequence belongs to the universal ribosomal protein uL24 family. In terms of assembly, part of the 50S ribosomal subunit.

One of two assembly initiator proteins, it binds directly to the 5'-end of the 23S rRNA, where it nucleates assembly of the 50S subunit. Functionally, one of the proteins that surrounds the polypeptide exit tunnel on the outside of the subunit. The polypeptide is Large ribosomal subunit protein uL24 (Alkaliphilus oremlandii (strain OhILAs) (Clostridium oremlandii (strain OhILAs))).